A 669-amino-acid chain; its full sequence is Acetolactate synthase, mitochondrial (669 aa).

The N-terminal 140 residues, 1–140 (MTVLAPLRRL…PRHEQAAGHA (140 aa)), are a transit peptide targeting the mitochondrion. Residue E134 coordinates thiamine diphosphate. FAD-binding positions include R236, 351–372 (HGSGYANMAMQEADLILALGVR), and 403–422 (DISPKNIGKVVQPTEAIEGD). Residues 497–577 (AHQMWAATFY…VKILILNNEE (81 aa)) form a thiamine pyrophosphate binding region. 2 residues coordinate Mg(2+): D548 and N575.

The protein belongs to the TPP enzyme family. Mg(2+) serves as cofactor. Requires thiamine diphosphate as cofactor.

Its subcellular location is the mitochondrion. It catalyses the reaction 2 pyruvate + H(+) = (2S)-2-acetolactate + CO2. It functions in the pathway amino-acid biosynthesis; L-isoleucine biosynthesis; L-isoleucine from 2-oxobutanoate: step 1/4. It participates in amino-acid biosynthesis; L-valine biosynthesis; L-valine from pyruvate: step 1/4. The chain is Acetolactate synthase, mitochondrial (ilv1) from Schizosaccharomyces pombe (strain 972 / ATCC 24843) (Fission yeast).